Here is an 84-residue protein sequence, read N- to C-terminus: Cell division topological specificity factor (84 aa).

Belongs to the MinE family.

In terms of biological role, prevents the cell division inhibition by proteins MinC and MinD at internal division sites while permitting inhibition at polar sites. This ensures cell division at the proper site by restricting the formation of a division septum at the midpoint of the long axis of the cell. This chain is Cell division topological specificity factor, found in Cupriavidus taiwanensis (strain DSM 17343 / BCRC 17206 / CCUG 44338 / CIP 107171 / LMG 19424 / R1) (Ralstonia taiwanensis (strain LMG 19424)).